A 2359-amino-acid chain; its full sequence is Neuron navigator 3 (2359 aa).

The region spanning 77-184 (IEDSKIYTDW…LFFSLSRYKQ (108 aa)) is the Calponin-homology (CH) domain. 4 stretches are compositionally biased toward polar residues: residues 204–226 (THTAPQSEASQAKTQQDMQSSLT), 233–243 (SKHSGIATSQK), 257–279 (ASSSNKAQGASNLNRRSQSFNSI), and 300–317 (QPSSGINGNTQPPSTSGQ). 2 disordered regions span residues 204-623 (THTA…QQQH) and 641-660 (ENEGTSLPPADSCTSPTKMD). Over residues 318 to 329 (PPASAIPSPSAS) the composition is skewed to low complexity. Polar residues predominate over residues 335–352 (KSMNVKHSATSTMLTVKQ). Composition is skewed to low complexity over residues 353-363 (PSPATSPTPSS) and 427-439 (NSGLNSGGSTNSS). Positions 465–491 (PKEKEEKTRDKNKACAEKSGKEEKDQV) are enriched in basic and acidic residues. A compositionally biased stretch (low complexity) spans 522 to 536 (IPSSSGIPKPGSKVP). Positions 592–623 (ASPSSSCVMQVTHSSGQSPGNGAVQLPQQQQH) are enriched in polar residues. The stretch at 680–708 (EARRMRTVKNIADLRQNLEETMSSLRGTQ) forms a coiled coil. Disordered regions lie at residues 878-1315 (ADSW…SPLF), 1413-1472 (LSES…AMSS), 1653-1758 (GALN…KPSQ), and 1829-1855 (ETGNTAKPARPPSDSSSTASSSSSRQS). Composition is skewed to low complexity over residues 883-896 (DSSSVSSGLSDTLD) and 904-916 (NTTSSISSYSNIT). Residues 917 to 926 (VPSRKNTQLK) show a composition bias toward polar residues. Basic and acidic residues predominate over residues 943–960 (EELKKAEGDCDSHGDGAA). 2 stretches are compositionally biased toward polar residues: residues 978–989 (QKASLSVSQTGS) and 997–1013 (QGGTPATARQKTSTSAL). Over residues 1017 to 1029 (GKTDDAKASEKGK) the composition is skewed to basic and acidic residues. Composition is skewed to low complexity over residues 1077–1095 (GASTMITSSGATITSGSAT) and 1160–1173 (SSTSSIDSNVSSKS). The segment covering 1190–1199 (GRSSPVTVNQ) has biased composition (polar residues). Low complexity-rich tracts occupy residues 1209–1229 (VSDSESVSLSGSPKSSPTSAS), 1256–1266 (GAKAGGKSASA), and 1274–1285 (SSSVVLSPSTSL). A compositionally biased stretch (gly residues) spans 1299-1308 (GSMGSAGGLS). Over residues 1439–1448 (NQEEGKEWLR) the composition is skewed to basic and acidic residues. Residues 1449-1461 (SHSTGGLQDTGNQ) are compositionally biased toward polar residues. Residues Ser-1462 and Ser-1466 each carry the phosphoserine modification. Residues 1462 to 1472 (SPLVSPSAMSS) show a composition bias toward low complexity. Residues 1565–1656 (AEEKAHSEQI…AQAAIQGALN (92 aa)) are a coiled coil. Low complexity-rich tracts occupy residues 1675-1692 (SVSSINSATSHSSIGSGN) and 1749-1758 (SGSSSMKPSQ). The stretch at 1768–1835 (EAEAEIILQL…LKAETGNTAK (68 aa)) forms a coiled coil. Residues 1841-1855 (SDSSSTASSSSSRQS) show a composition bias toward low complexity.

Belongs to the Nav/unc-53 family. In terms of tissue distribution, present in neurons from central and peripheral nervous systems (at protein level). Highly expressed in brain cortex, midbrain, cerebellum and hippocampus.

Its subcellular location is the nucleus outer membrane. Functionally, plays a role in cell migration. May be involved in neuron regeneration. May regulate IL2 production by T-cells. The protein is Neuron navigator 3 (Nav3) of Mus musculus (Mouse).